Reading from the N-terminus, the 66-residue chain is Ocellatin-PT2 (66 aa).

A signal peptide spans 1–22 (MAFLKKSLFLVLFLGLVSLSIC). The propeptide occupies 23–39 (DEEKRQDEDDDDDDDEE). The residue at position 66 (Val-66) is a Valine amide.

As to expression, expressed by the skin glands.

It is found in the secreted. Its function is as follows. Has no antibacterial activity against Gram-negative bacteria E.coli ATCC 25922, S.pneumoniae ATCC 700603 and S.choleraesuis ATCC 14028 or against Gram-positive bacterium S.aureus ATCC 29313. Shows no hemolytic activity and no cytotoxicity. This chain is Ocellatin-PT2, found in Leptodactylus pustulatus (Ceara white-lipped frog).